Here is a 201-residue protein sequence, read N- to C-terminus: CASP-like protein 1F2 (201 aa).

Topologically, residues 1-29 (MITSIATTTAGAFEVKSLGFIPYPSQPKR) are cytoplasmic. A helical transmembrane segment spans residues 30–50 (IFFMAQVIFRILAIAFAVASI). Residues 51–78 (SAMVTSDQNVIVFGMDTAARYSYSSAFR) are Extracellular-facing. A helical membrane pass occupies residues 79-99 (FLVGANAVVCGFSVLSLIFVC). Residues 100–119 (LMSRRSEAILEKNYYLFLHD) are Cytoplasmic-facing. Residues 120–140 (MVMMVMMVSGCSAATAIGYVG) traverse the membrane as a helical segment. Residues 141 to 162 (RYGEKEITWTAVCDFVGKFCNQ) lie on the Extracellular side of the membrane. The chain crosses the membrane as a helical span at residues 163-183 (ALVSIVLAYLALFCYVALTTL). At 184-201 (AAHKLNHSSSTAAIRQNE) the chain is on the cytoplasmic side.

This sequence belongs to the Casparian strip membrane proteins (CASP) family. Homodimer and heterodimers.

The protein resides in the cell membrane. The sequence is that of CASP-like protein 1F2 from Ricinus communis (Castor bean).